The following is a 362-amino-acid chain: UDP-arabinopyranose mutase 3 (362 aa).

The DXD motif motif lies at 106-108 (DDD). R154 carries N-linked (Glc...) arginine glycosylation.

The protein belongs to the RGP family. Heterodimer with RGP1. Mn(2+) is required as a cofactor. Requires Mg(2+) as cofactor. Post-translationally, reversibly glycosylated in vitro by UDP-glucose, UDP-xylose and UDP-galactose, but not UDP-mannose. In terms of tissue distribution, specifically expressed in developing seeds.

It localises to the cytoplasm. The protein localises to the cytosol. It is found in the golgi apparatus. It catalyses the reaction UDP-beta-L-arabinofuranose = UDP-beta-L-arabinopyranose. UDP-L-arabinose mutase involved in the biosynthesis of cell wall non-cellulosic polysaccharides. Catalyzes the interconvertion of UDP-L-arabinopyranose (UDP-Arap) and UDP-L-arabinofuranose (UDP-Araf). Preferentially catalyzes the formation of UDP-Arap from UDP-Araf. At thermodynamic equilibrium in vitro the ratio of the pyranose form over the furanose form is 95:5. Is not active on other UDP-sugars (UDP-Gal, UDP-Xyl, UDP-Glc, GDP-Man and GDP-Fuc). Is probably active as heteromer in vivo. The sequence is that of UDP-arabinopyranose mutase 3 from Arabidopsis thaliana (Mouse-ear cress).